Reading from the N-terminus, the 72-residue chain is UPF0352 protein Patl_3379 (72 aa).

Belongs to the UPF0352 family.

This chain is UPF0352 protein Patl_3379, found in Pseudoalteromonas atlantica (strain T6c / ATCC BAA-1087).